A 91-amino-acid polypeptide reads, in one-letter code: Large ribosomal subunit protein bL27 (91 aa).

A disordered region spans residues 1–22; that stretch reads MAHKKGQGSSRNGRDSNPQYRG. A compositionally biased stretch (polar residues) spans 7–19; the sequence is QGSSRNGRDSNPQ.

The protein belongs to the bacterial ribosomal protein bL27 family.

The protein is Large ribosomal subunit protein bL27 of Myxococcus xanthus (strain DK1622).